Reading from the N-terminus, the 395-residue chain is S-adenosylmethionine synthase (395 aa).

His-18 lines the ATP pocket. Asp-20 is a binding site for Mg(2+). Glu-46 is a K(+) binding site. Residues Glu-59 and Gln-103 each coordinate L-methionine. The interval 103 to 113 (QSADIAVGVDS) is flexible loop. Residues 170–172 (DAK), 235–236 (KF), Asp-244, 250–251 (RK), Ala-267, and Lys-271 contribute to the ATP site. Position 244 (Asp-244) interacts with L-methionine. Position 275 (Lys-275) interacts with L-methionine.

This sequence belongs to the AdoMet synthase family. As to quaternary structure, homotetramer; dimer of dimers. Mg(2+) serves as cofactor. K(+) is required as a cofactor.

Its subcellular location is the cytoplasm. It carries out the reaction L-methionine + ATP + H2O = S-adenosyl-L-methionine + phosphate + diphosphate. It functions in the pathway amino-acid biosynthesis; S-adenosyl-L-methionine biosynthesis; S-adenosyl-L-methionine from L-methionine: step 1/1. Functionally, catalyzes the formation of S-adenosylmethionine (AdoMet) from methionine and ATP. The overall synthetic reaction is composed of two sequential steps, AdoMet formation and the subsequent tripolyphosphate hydrolysis which occurs prior to release of AdoMet from the enzyme. This is S-adenosylmethionine synthase from Granulibacter bethesdensis (strain ATCC BAA-1260 / CGDNIH1).